Reading from the N-terminus, the 715-residue chain is Scinderin (715 aa).

The actin-severing stretch occupies residues 1 to 363 (MARELYHEEF…DGFGKVYVTE (363 aa)). One copy of the Gelsolin-like 1 repeat lies at 27 to 76 (LELVPVPQSAHGDFYVGDAYLVLHTAKTSRGFTYHLHFWLGKECSQDEST). Tyr-102 is subject to Phosphotyrosine. A 1,2-diacyl-sn-glycero-3-phospho-(1D-myo-inositol-4,5-bisphosphate) is bound by residues 112 to 119 (KGGLKYKA) and 138 to 146 (RLLHVKGRR). Gelsolin-like repeat units lie at residues 148-188 (VRAT…YERL), 265-307 (VVAE…QERK), 398-451 (VEIW…DELT), and 523-564 (TRIV…EEEK). Positions 364–715 (KVAQIKQIPF…WFLGWDSSKW (352 aa)) are ca(2+)-dependent actin binding. Residues Asn-538, Asp-539, and Glu-562 each contribute to the Ca(2+) site. Residue Tyr-599 is modified to Phosphotyrosine. The Gelsolin-like 6 repeat unit spans residues 626 to 668 (FVIEEIPGEFTQDDLAEDDVMLLDAWEQIFIWIGKDANEVEKK). Ca(2+) contacts are provided by Asp-643, Asp-644, and Glu-666.

It belongs to the villin/gelsolin family. In terms of tissue distribution, expressed in megakaryocytes.

It localises to the cytoplasm. Its subcellular location is the cytoskeleton. The protein resides in the cell projection. The protein localises to the podosome. In terms of biological role, ca(2+)-dependent actin filament-severing protein that has a regulatory function in exocytosis by affecting the organization of the microfilament network underneath the plasma membrane. Severing activity is inhibited by phosphatidylinositol 4,5-bis-phosphate (PIP2). In vitro, also has barbed end capping and nucleating activities in the presence of Ca(2+). Required for megakaryocyte differentiation, maturation, polyploidization and apoptosis with the release of platelet-like particles. Plays a role in osteoclastogenesis (OCG) and actin cytoskeletal organization in osteoclasts. Regulates chondrocyte proliferation and differentiation. Inhibits cell proliferation and tumorigenesis. Signaling is mediated by MAPK, p38 and JNK pathways. The chain is Scinderin from Homo sapiens (Human).